A 349-amino-acid polypeptide reads, in one-letter code: UDP-N-acetylenolpyruvoylglucosamine reductase (349 aa).

The FAD-binding PCMH-type domain occupies 17–187 (VNESADLIIQ…TAITLRLNKQ (171 aa)). Residue arginine 163 is part of the active site. Residue serine 233 is the Proton donor of the active site. Glutamate 328 is an active-site residue.

Belongs to the MurB family. It depends on FAD as a cofactor.

The protein resides in the cytoplasm. The catalysed reaction is UDP-N-acetyl-alpha-D-muramate + NADP(+) = UDP-N-acetyl-3-O-(1-carboxyvinyl)-alpha-D-glucosamine + NADPH + H(+). It participates in cell wall biogenesis; peptidoglycan biosynthesis. Cell wall formation. This is UDP-N-acetylenolpyruvoylglucosamine reductase from Aliivibrio fischeri (strain ATCC 700601 / ES114) (Vibrio fischeri).